Here is a 350-residue protein sequence, read N- to C-terminus: Eukaryotic translation initiation factor 3 subunit I (350 aa).

WD repeat units lie at residues 8 to 49 (GHER…GTLE), 51 to 89 (HQGVIWSIDVDPETHLCATGGGDLAIKLWKVENGQCVYT), 91 to 135 (DSPS…ATLS), 149 to 188 (SEGSKATVAGWSGDGDYIIVGHDNGYVSKYDSKTGKLVTS), 198 to 240 (EKNV…KVYK), and 296 to 335 (GHFGPLNTVAVHPDGTGYSSGGEDGFIRVHTFDKSYQDFL).

This sequence belongs to the eIF-3 subunit I family. In terms of assembly, component of the eukaryotic translation initiation factor 3 (eIF-3) complex.

The protein resides in the cytoplasm. Functionally, component of the eukaryotic translation initiation factor 3 (eIF-3) complex, which is involved in protein synthesis of a specialized repertoire of mRNAs and, together with other initiation factors, stimulates binding of mRNA and methionyl-tRNAi to the 40S ribosome. The eIF-3 complex specifically targets and initiates translation of a subset of mRNAs involved in cell proliferation. In Candida albicans (strain SC5314 / ATCC MYA-2876) (Yeast), this protein is Eukaryotic translation initiation factor 3 subunit I.